A 308-amino-acid polypeptide reads, in one-letter code: Putative integrase/recombinase y4qK (308 aa).

The Core-binding (CB) domain occupies 15 to 97 (LVMTPLRQRM…ALRFFFSVTL (83 aa)). Positions 115 to 288 (KLPIILSPDE…ATNKVCATSS (174 aa)) constitute a Tyr recombinase domain. Residues Arg150, Lys175, His240, Arg243, and His266 contribute to the active site. Tyr275 acts as the O-(3'-phospho-DNA)-tyrosine intermediate in catalysis.

The protein belongs to the 'phage' integrase family.

Functionally, may function as an integrase. The protein is Putative integrase/recombinase y4qK of Sinorhizobium fredii (strain NBRC 101917 / NGR234).